Reading from the N-terminus, the 914-residue chain is PHD finger protein 14 (914 aa).

The disordered stretch occupies residues 19 to 276 (DALDYDSSDD…EDSLLERPQT (258 aa)). Positions 53–68 (ESAAGSESDSDAAAAS) are enriched in low complexity. Residues 90 to 102 (EKVKESFSEETSS) show a composition bias toward basic and acidic residues. Composition is skewed to acidic residues over residues 155-168 (ELNEMDDYDSEDDN) and 191-233 (GEED…DSEE). Residues 285 to 346 (ILICCVCLGD…PWFCDACKNG (62 aa)) form a PHD-type 1 zinc finger. Residues cysteine 288, cysteine 291, cysteine 305, cysteine 308, histidine 313, cysteine 316, cysteine 340, cysteine 343, cysteine 351, cysteine 354, histidine 371, cysteine 374, cysteine 407, cysteine 410, cysteine 424, cysteine 429, histidine 434, cysteine 437, cysteine 461, and histidine 464 each contribute to the Zn(2+) site. Residues 348–381 (SPSCELCPSQDGIFKETDAGRWVHVVCALYVPGV) form a C2HC pre-PHD-type zinc finger. The PHD-type 2 zinc-finger motif lies at 405 to 465 (KECSLCEDTR…PFFAYCKQHA (61 aa)). Residues 596–644 (MIQIQDNIVEQKNLKDKLESEQEKLHMEYDKLCESLEDLQNVNGQLRTE) are a coiled coil. A PHD-type 3 zinc finger spans residues 692–746 (LYSCGICKKNQDQHLLLLCDTCKLHYHLGCLDPPLTRMPKKTKNSYWQCSECDQA). Zn(2+)-binding residues include cysteine 695, cysteine 698, cysteine 710, cysteine 713, histidine 718, cysteine 721, cysteine 740, and cysteine 743. Residues 777–838 (PQEMSPEPKK…PKADDTRTEC (62 aa)) form a disordered region. A compositionally biased stretch (basic residues) spans 792–802 (TRTRGQKRKRM). A compositionally biased stretch (basic and acidic residues) spans 803–817 (SICEEEKMEEPLPRE). The segment at 835-888 (RTECTTCKGPGDNENLVRCDECRLCYHFGCLDPPLKKSPKQTGYGWICQECDTS) adopts a PHD-type 4 zinc-finger fold. Zn(2+) contacts are provided by cysteine 838, cysteine 841, cysteine 853, cysteine 856, histidine 861, cysteine 864, cysteine 882, and cysteine 885. Residues 887–914 (TSSSKEEEAQEVEEESVNEETAEQEIPD) are disordered. Positions 894–914 (EAQEVEEESVNEETAEQEIPD) are enriched in acidic residues.

In terms of assembly, interacts with histone H3.

The protein localises to the nucleus. Histone-binding protein. Binds preferentially to unmodified histone H3 but can also bind to a lesser extent to histone H3 trimethylated at 'Lys-9' (H3K9me3) as well as to histone H3 monomethylated at 'Lys-27' (H3K27ac) and trimethylated at 'Lys-27' (H3K27me3). Represses PDGFRA expression, thus playing a role in regulation of mesenchymal cell proliferation. The sequence is that of PHD finger protein 14 from Danio rerio (Zebrafish).